The sequence spans 260 residues: Imidazole glycerol phosphate synthase subunit HisF (260 aa).

Active-site residues include Asp-11 and Asp-130.

Belongs to the HisA/HisF family. As to quaternary structure, heterodimer of HisH and HisF.

The protein localises to the cytoplasm. The catalysed reaction is 5-[(5-phospho-1-deoxy-D-ribulos-1-ylimino)methylamino]-1-(5-phospho-beta-D-ribosyl)imidazole-4-carboxamide + L-glutamine = D-erythro-1-(imidazol-4-yl)glycerol 3-phosphate + 5-amino-1-(5-phospho-beta-D-ribosyl)imidazole-4-carboxamide + L-glutamate + H(+). Its pathway is amino-acid biosynthesis; L-histidine biosynthesis; L-histidine from 5-phospho-alpha-D-ribose 1-diphosphate: step 5/9. Its function is as follows. IGPS catalyzes the conversion of PRFAR and glutamine to IGP, AICAR and glutamate. The HisF subunit catalyzes the cyclization activity that produces IGP and AICAR from PRFAR using the ammonia provided by the HisH subunit. The protein is Imidazole glycerol phosphate synthase subunit HisF of Desulfatibacillum aliphaticivorans.